The sequence spans 86 residues: Small ribosomal subunit protein bS20 (86 aa).

Positions M1–A11 are enriched in basic residues. Positions M1–S26 are disordered.

Belongs to the bacterial ribosomal protein bS20 family.

Binds directly to 16S ribosomal RNA. In Pseudoalteromonas translucida (strain TAC 125), this protein is Small ribosomal subunit protein bS20.